The chain runs to 614 residues: MNNLIKSKLELLPTSPGCYIHKDKNGTIIYVGKAKNLRNRVRSYFRGSHDTKTEALVSEIVDFEFIVTESNIEALLLEINLIKENKPKYNIMLKDDKSYPFIKITNERYPRLIITRQVKKDGGLYFGPYPDVGAANEIKRLLDRIFPFRKCTNPPSKVCFYYHIGQCMAHTICKKDEAYFKSMAQEVSDFLKGQDDKIIDDLKSKMAVAAQSMEFERAAEYRDLIQAIGTLRTKQRVMAKDLQNRDVFGYYVDKGWMCVQVFFVRQGKLIERDVNLFPYFNDPDEDFLTYVGQFYQEKSHLVPNEVLIPQDIDEEAVKALVDSKILKPQRGEKKQLVNLAIKNARVSLEQKFNLLEKSVEKTQGAIENLGRLLQIPTPVRIESFDNSNIMGTSPVSAMVVFVNGKPSKKDYRKYKIKTVVGPDDYASMREVIRRRYGRVQREALTPPDLIVIDGGQGQVNIAKQVIQEELGLDIPIAGLQKNDKHQTHELLFGDPLEVVDLSRNSQEFFLLQRIQDEVHRFAITFHRQLRSKNSFSSQLDGIDGLGPKRKQNLMKHFKSLTKIKEASVDEIVEVGVPRVVAEAVQRKLNPQGEALPQVAEERVDYQTEGNHNEP.

One can recognise a GIY-YIG domain in the interval 14-91; that stretch reads TSPGCYIHKD…IKENKPKYNI (78 aa). In terms of domain architecture, UVR spans 196–231; it reads DKIIDDLKSKMAVAAQSMEFERAAEYRDLIQAIGTL. The tract at residues 595–614 is disordered; the sequence is LPQVAEERVDYQTEGNHNEP. Positions 599–614 are enriched in basic and acidic residues; sequence AEERVDYQTEGNHNEP.

The protein belongs to the UvrC family. As to quaternary structure, interacts with UvrB in an incision complex.

It localises to the cytoplasm. The UvrABC repair system catalyzes the recognition and processing of DNA lesions. UvrC both incises the 5' and 3' sides of the lesion. The N-terminal half is responsible for the 3' incision and the C-terminal half is responsible for the 5' incision. The sequence is that of UvrABC system protein C from Streptococcus pneumoniae serotype 4 (strain ATCC BAA-334 / TIGR4).